The primary structure comprises 350 residues: Glutamyl-tRNA reductase (350 aa).

Residues threonine 53–arginine 56, serine 105, glutamate 110–glutamine 112, and glutamine 116 contribute to the substrate site. Catalysis depends on cysteine 54, which acts as the Nucleophile. Glycine 185–alanine 190 lines the NADP(+) pocket.

It belongs to the glutamyl-tRNA reductase family. As to quaternary structure, homodimer.

It catalyses the reaction (S)-4-amino-5-oxopentanoate + tRNA(Glu) + NADP(+) = L-glutamyl-tRNA(Glu) + NADPH + H(+). It functions in the pathway porphyrin-containing compound metabolism; protoporphyrin-IX biosynthesis; 5-aminolevulinate from L-glutamyl-tRNA(Glu): step 1/2. Its function is as follows. Catalyzes the NADPH-dependent reduction of glutamyl-tRNA(Glu) to glutamate 1-semialdehyde (GSA). This is Glutamyl-tRNA reductase from Deinococcus radiodurans (strain ATCC 13939 / DSM 20539 / JCM 16871 / CCUG 27074 / LMG 4051 / NBRC 15346 / NCIMB 9279 / VKM B-1422 / R1).